A 702-amino-acid polypeptide reads, in one-letter code: Ribosomal RNA large subunit methyltransferase K/L (702 aa).

One can recognise a THUMP domain in the interval 43–154; sequence LVYQSLMWSR…KETASIALDL (112 aa).

Belongs to the methyltransferase superfamily. RlmKL family.

The protein localises to the cytoplasm. The enzyme catalyses guanosine(2445) in 23S rRNA + S-adenosyl-L-methionine = N(2)-methylguanosine(2445) in 23S rRNA + S-adenosyl-L-homocysteine + H(+). It catalyses the reaction guanosine(2069) in 23S rRNA + S-adenosyl-L-methionine = N(2)-methylguanosine(2069) in 23S rRNA + S-adenosyl-L-homocysteine + H(+). In terms of biological role, specifically methylates the guanine in position 2445 (m2G2445) and the guanine in position 2069 (m7G2069) of 23S rRNA. This chain is Ribosomal RNA large subunit methyltransferase K/L, found in Shigella flexneri serotype 5b (strain 8401).